The primary structure comprises 148 residues: 3-hydroxyacyl-[acyl-carrier-protein] dehydratase FabZ (148 aa).

Residue His-49 is part of the active site.

The protein belongs to the thioester dehydratase family. FabZ subfamily.

It localises to the cytoplasm. It carries out the reaction a (3R)-hydroxyacyl-[ACP] = a (2E)-enoyl-[ACP] + H2O. In terms of biological role, involved in unsaturated fatty acids biosynthesis. Catalyzes the dehydration of short chain beta-hydroxyacyl-ACPs and long chain saturated and unsaturated beta-hydroxyacyl-ACPs. In Ehrlichia canis (strain Jake), this protein is 3-hydroxyacyl-[acyl-carrier-protein] dehydratase FabZ.